A 677-amino-acid chain; its full sequence is Methionine--tRNA ligase (677 aa).

The short motif at 15 to 25 (PYANGSIHLGH) is the 'HIGH' region element. Zn(2+) contacts are provided by Cys146, Cys149, Cys159, and Cys162. The 'KMSKS' region signature appears at 333–337 (KMSKS). Lys336 lines the ATP pocket. One can recognise a tRNA-binding domain in the interval 575-677 (DFAKVDLRVA…AGAKPGHQVK (103 aa)).

It belongs to the class-I aminoacyl-tRNA synthetase family. MetG type 1 subfamily. In terms of assembly, homodimer. Zn(2+) serves as cofactor.

The protein localises to the cytoplasm. The enzyme catalyses tRNA(Met) + L-methionine + ATP = L-methionyl-tRNA(Met) + AMP + diphosphate. Functionally, is required not only for elongation of protein synthesis but also for the initiation of all mRNA translation through initiator tRNA(fMet) aminoacylation. This Escherichia coli O127:H6 (strain E2348/69 / EPEC) protein is Methionine--tRNA ligase.